The primary structure comprises 190 residues: dCTP deaminase (190 aa).

Residue 113–118 participates in dCTP binding; the sequence is KSTYAR. E139 (proton donor/acceptor) is an active-site residue. Q158, Y172, K181, and Q182 together coordinate dCTP.

The protein belongs to the dCTP deaminase family. In terms of assembly, homotrimer.

The catalysed reaction is dCTP + H2O + H(+) = dUTP + NH4(+). It functions in the pathway pyrimidine metabolism; dUMP biosynthesis; dUMP from dCTP (dUTP route): step 1/2. Functionally, catalyzes the deamination of dCTP to dUTP. In Chlamydia abortus (strain DSM 27085 / S26/3) (Chlamydophila abortus), this protein is dCTP deaminase.